The following is a 632-amino-acid chain: Extracellular metalloproteinase 2 (632 aa).

The N-terminal stretch at 1 to 19 (MHGLLLAGLAAALPLGVAG) is a signal peptide. Residues 20-244 (LPARQQSGLS…VHNVVDYVAS (225 aa)) constitute a propeptide that is removed on maturation. Residue asparagine 270 is glycosylated (N-linked (GlcNAc...) asparagine). Histidine 429 lines the Zn(2+) pocket. The active site involves glutamate 430. Histidine 433 contributes to the Zn(2+) binding site.

Belongs to the peptidase M36 family. It depends on Zn(2+) as a cofactor.

Its subcellular location is the secreted. Secreted metalloproteinase that allows assimilation of proteinaceous substrates and probably acts as a virulence factor. The chain is Extracellular metalloproteinase 2 (MEP2) from Arthroderma gypseum (strain ATCC MYA-4604 / CBS 118893) (Microsporum gypseum).